The following is a 2116-amino-acid chain: Myosin-2 heavy chain (2116 aa).

The Myosin N-terminal SH3-like domain occupies 30–82; the sequence is SDKRYIWYNPDPKERDSYECGEIVSETSDSFTFKTVDGQDRQVKKDDANQRNP. A Myosin motor domain is found at 86–759; sequence DGVEDMSELS…QLARIEEARE (674 aa). Position 130 is an N6,N6-dimethyllysine (K130). 179 to 186 contacts ATP; the sequence is GESGAGKT. 2 actin-binding regions span residues 638–660 and 738–752; these read LASLMATLETTNPHFVRCIIPNN and RFGITKIFFRAGQLA. Positions 762-791 constitute an IQ domain; it reads ISEIIKAIQAATRGWIARKVYKQAREHTVA. A coiled-coil region spans residues 817–2116; the sequence is ARPLLKRRNF…MADFFGGFKA (1300 aa). 6 disordered regions span residues 1295 to 1314, 1363 to 1399, 1415 to 1444, 1711 to 1731, 1771 to 1791, and 1805 to 1844; these read VNEQLEEEKKQKESNEKRKV, DKSVEQLKTLQAKNEELRNTAEEAEGQLDRAERSKKK, TAKKVKAEKAMKKAETDYRSTKSELDDAKN, VRDQLEEEEDSRSELEDSKRR, LEDEKKKLNESERAKKRLESE, and NRSRAEKDRKKYEKDLKDTKYKLNDEAATKTQTEIGAAKL. 3 stretches are compositionally biased toward basic and acidic residues: residues 1375-1399, 1415-1443, and 1722-1731; these read KNEELRNTAEEAEGQLDRAERSKKK, TAKKVKAEKAMKKAETDYRSTKSELDDAK, and RSELEDSKRR. The span at 1805 to 1832 shows a compositional bias: basic and acidic residues; it reads NRSRAEKDRKKYEKDLKDTKYKLNDEAA. 3 positions are modified to phosphothreonine; by MHCK: T1823, T1833, and T2029.

The protein belongs to the TRAFAC class myosin-kinesin ATPase superfamily. Myosin family. Myosin-2 heavy chain is two-headed. It self-assembles into filaments. Hexamer of 2 heavy chain subunits (MHC), 2 alkali light chain subunits (MLC) and 2 regulatory light chain subunits (MLC-2). Associates with elmoA. In terms of processing, phosphorylation inhibits thick filament formation and reduces the actin-activated ATPase activity.

It is found in the cytoplasm. It localises to the cell cortex. In terms of biological role, myosin is a protein that binds to actin and has ATPase activity that is activated by actin. This is Myosin-2 heavy chain (mhcA) from Dictyostelium discoideum (Social amoeba).